A 28-amino-acid polypeptide reads, in one-letter code: Odorant-binding protein 1 (28 aa).

It belongs to the calycin superfamily. Lipocalin family. Nasal mucosa.

Its subcellular location is the secreted. The protein localises to the extracellular space. Its function is as follows. This soluble protein may play a specific role in odor discrimination and perception. The polypeptide is Odorant-binding protein 1 (Hystrix cristata (North African crested porcupine)).